The chain runs to 670 residues: tRNA 5-methylaminomethyl-2-thiouridine biosynthesis bifunctional protein MnmC (670 aa).

Residues 1 to 242 (MTFSVQHAEI…KRECLSGLKI (242 aa)) are tRNA (mnm(5)s(2)U34)-methyltransferase. The interval 269-670 (IGGGIASLCA…KKWLKGSKVE (402 aa)) is FAD-dependent cmnm(5)s(2)U34 oxidoreductase.

This sequence in the N-terminal section; belongs to the methyltransferase superfamily. tRNA (mnm(5)s(2)U34)-methyltransferase family. The protein in the C-terminal section; belongs to the DAO family. FAD is required as a cofactor.

The protein localises to the cytoplasm. It catalyses the reaction 5-aminomethyl-2-thiouridine(34) in tRNA + S-adenosyl-L-methionine = 5-methylaminomethyl-2-thiouridine(34) in tRNA + S-adenosyl-L-homocysteine + H(+). Its function is as follows. Catalyzes the last two steps in the biosynthesis of 5-methylaminomethyl-2-thiouridine (mnm(5)s(2)U) at the wobble position (U34) in tRNA. Catalyzes the FAD-dependent demodification of cmnm(5)s(2)U34 to nm(5)s(2)U34, followed by the transfer of a methyl group from S-adenosyl-L-methionine to nm(5)s(2)U34, to form mnm(5)s(2)U34. This Haemophilus influenzae (strain PittEE) protein is tRNA 5-methylaminomethyl-2-thiouridine biosynthesis bifunctional protein MnmC.